The chain runs to 86 residues: Cell division topological specificity factor (86 aa).

Belongs to the MinE family.

In terms of biological role, prevents the cell division inhibition by proteins MinC and MinD at internal division sites while permitting inhibition at polar sites. This ensures cell division at the proper site by restricting the formation of a division septum at the midpoint of the long axis of the cell. This Azoarcus sp. (strain BH72) protein is Cell division topological specificity factor.